A 314-amino-acid chain; its full sequence is Thymidylate synthase (314 aa).

DUMP contacts are provided by residues Arg-21 and 176–177; that span reads RR. Residue Cys-196 is the Nucleophile of the active site. Residues 216-219, Asn-227, and 257-259 each bind dUMP; these read RSAD and HLY. Asp-219 provides a ligand contact to (6R)-5,10-methylene-5,6,7,8-tetrahydrofolate. Ser-313 serves as a coordination point for (6R)-5,10-methylene-5,6,7,8-tetrahydrofolate.

It belongs to the thymidylate synthase family. Bacterial-type ThyA subfamily. In terms of assembly, homodimer.

Its subcellular location is the cytoplasm. The enzyme catalyses dUMP + (6R)-5,10-methylene-5,6,7,8-tetrahydrofolate = 7,8-dihydrofolate + dTMP. The protein operates within pyrimidine metabolism; dTTP biosynthesis. Its function is as follows. Catalyzes the reductive methylation of 2'-deoxyuridine-5'-monophosphate (dUMP) to 2'-deoxythymidine-5'-monophosphate (dTMP) while utilizing 5,10-methylenetetrahydrofolate (mTHF) as the methyl donor and reductant in the reaction, yielding dihydrofolate (DHF) as a by-product. This enzymatic reaction provides an intracellular de novo source of dTMP, an essential precursor for DNA biosynthesis. The sequence is that of Thymidylate synthase from Listeria monocytogenes serotype 4a (strain HCC23).